Consider the following 44-residue polypeptide: Protein non-structural 7b (44 aa).

A helical transmembrane segment spans residues F9 to W29.

The protein resides in the host membrane. This Homo sapiens (Human) protein is Protein non-structural 7b.